We begin with the raw amino-acid sequence, 165 residues long: Crossover junction endodeoxyribonuclease RuvC (165 aa).

Active-site residues include Asp-7, Glu-67, and Asp-140. Mg(2+)-binding residues include Asp-7, Glu-67, and Asp-140.

Belongs to the RuvC family. In terms of assembly, homodimer which binds Holliday junction (HJ) DNA. The HJ becomes 2-fold symmetrical on binding to RuvC with unstacked arms; it has a different conformation from HJ DNA in complex with RuvA. In the full resolvosome a probable DNA-RuvA(4)-RuvB(12)-RuvC(2) complex forms which resolves the HJ. The cofactor is Mg(2+).

Its subcellular location is the cytoplasm. The catalysed reaction is Endonucleolytic cleavage at a junction such as a reciprocal single-stranded crossover between two homologous DNA duplexes (Holliday junction).. Its function is as follows. The RuvA-RuvB-RuvC complex processes Holliday junction (HJ) DNA during genetic recombination and DNA repair. Endonuclease that resolves HJ intermediates. Cleaves cruciform DNA by making single-stranded nicks across the HJ at symmetrical positions within the homologous arms, yielding a 5'-phosphate and a 3'-hydroxyl group; requires a central core of homology in the junction. The consensus cleavage sequence is 5'-(A/T)TT(C/G)-3'. Cleavage occurs on the 3'-side of the TT dinucleotide at the point of strand exchange. HJ branch migration catalyzed by RuvA-RuvB allows RuvC to scan DNA until it finds its consensus sequence, where it cleaves and resolves the cruciform DNA. The sequence is that of Crossover junction endodeoxyribonuclease RuvC from Caldanaerobacter subterraneus subsp. tengcongensis (strain DSM 15242 / JCM 11007 / NBRC 100824 / MB4) (Thermoanaerobacter tengcongensis).